A 115-amino-acid polypeptide reads, in one-letter code: MARGGFPGGGFGGNMNNLMKQAQKMQKDMEKAQQDLENKTIEVSVGGGAINIVATGKKEIKEITIKPEVVDPDDVEMLQDLILSAVNEALRKADELANSEMSKITGGLGGLPGMF.

The protein belongs to the YbaB/EbfC family. As to quaternary structure, homodimer.

The protein localises to the cytoplasm. Its subcellular location is the nucleoid. Functionally, binds to DNA and alters its conformation. May be involved in regulation of gene expression, nucleoid organization and DNA protection. This Ruminiclostridium cellulolyticum (strain ATCC 35319 / DSM 5812 / JCM 6584 / H10) (Clostridium cellulolyticum) protein is Nucleoid-associated protein Ccel_0243.